A 196-amino-acid chain; its full sequence is NADH-quinone oxidoreductase subunit I (196 aa).

2 consecutive 4Fe-4S ferredoxin-type domains span residues 54–84 (LNRWPDGLEKCVGCELCAWACPADAIYVEGA) and 104–133 (RVYQINYLRCILCGLCIEACPTRALTMTNE). [4Fe-4S] cluster contacts are provided by Cys64, Cys67, Cys70, Cys74, Cys113, Cys116, Cys119, and Cys123.

This sequence belongs to the complex I 23 kDa subunit family. In terms of assembly, NDH-1 is composed of 14 different subunits. Subunits NuoA, H, J, K, L, M, N constitute the membrane sector of the complex. The cofactor is [4Fe-4S] cluster.

It is found in the cell membrane. The enzyme catalyses a quinone + NADH + 5 H(+)(in) = a quinol + NAD(+) + 4 H(+)(out). In terms of biological role, NDH-1 shuttles electrons from NADH, via FMN and iron-sulfur (Fe-S) centers, to quinones in the respiratory chain. The immediate electron acceptor for the enzyme in this species is believed to be ubiquinone. Couples the redox reaction to proton translocation (for every two electrons transferred, four hydrogen ions are translocated across the cytoplasmic membrane), and thus conserves the redox energy in a proton gradient. The protein is NADH-quinone oxidoreductase subunit I of Nocardioides sp. (strain ATCC BAA-499 / JS614).